The following is a 225-amino-acid chain: Ribosome maturation factor RimM (225 aa).

One can recognise a PRC barrel domain in the interval 144–225 (ADEFYWVDLI…RIVVDWEADY (82 aa)).

The protein belongs to the RimM family. In terms of assembly, binds ribosomal protein uS19.

The protein resides in the cytoplasm. Its function is as follows. An accessory protein needed during the final step in the assembly of 30S ribosomal subunit, possibly for assembly of the head region. Essential for efficient processing of 16S rRNA. May be needed both before and after RbfA during the maturation of 16S rRNA. It has affinity for free ribosomal 30S subunits but not for 70S ribosomes. The chain is Ribosome maturation factor RimM from Burkholderia vietnamiensis (strain G4 / LMG 22486) (Burkholderia cepacia (strain R1808)).